A 305-amino-acid polypeptide reads, in one-letter code: MKVGIIGAGFVGATAAFAMAMRGSCSEIVIVDADNAKAKAQASDIEHAVPFSFAMTVRDGDFQDLKGAKVIIISAGVNQKPGETRLQLLERNANIFRDIVPKVVAIESNAVIVVATNPVDILTSLTEQLAGLPEGQVMGSGTTLDTARFRALIGNELGVDPQHVHAYVIGEHGDSEVFAWSSANVAGLSIPSFCKARQVRWNEEIQSQIADNVRKAAYHIIEGKGATYYGIGAVLARISEALIRNHRAVLTVSANIPEFGVALSLPRLVSGKGIDGLIGVQTNDEERAALERSASVLREALSAIS.

NAD(+)-binding positions include Val-11, Asp-32, Lys-37, and 76-77 (GV). Substrate contacts are provided by residues Gln-79, Arg-85, and 117–120 (NPVD). Residues 115-117 (ATN) and Ser-140 contribute to the NAD(+) site. 145–148 (DTAR) contacts substrate. Beta-D-fructose 1,6-bisphosphate is bound by residues Arg-150 and His-165. His-172 functions as the Proton acceptor in the catalytic mechanism. At Tyr-218 the chain carries Phosphotyrosine. A substrate-binding site is contributed by Thr-227.

The protein belongs to the LDH/MDH superfamily. LDH family. Homotetramer.

The protein localises to the cytoplasm. The catalysed reaction is (S)-lactate + NAD(+) = pyruvate + NADH + H(+). It participates in fermentation; pyruvate fermentation to lactate; (S)-lactate from pyruvate: step 1/1. Allosterically activated by fructose 1,6-bisphosphate (FBP). Its function is as follows. Catalyzes the conversion of lactate to pyruvate. This Chloroherpeton thalassium (strain ATCC 35110 / GB-78) protein is L-lactate dehydrogenase.